The primary structure comprises 428 residues: Aspartate--tRNA(Asp) ligase (428 aa).

E166 is an L-aspartate binding site. Positions 188-191 (QLYK) are aspartate. R210 contributes to the L-aspartate binding site. Residues 210–212 (RAE), 218–220 (RHL), and E351 each bind ATP. Residues E351 and S354 each contribute to the Mg(2+) site. 2 residues coordinate L-aspartate: S354 and R358. Residue 399–402 (GLER) coordinates ATP.

It belongs to the class-II aminoacyl-tRNA synthetase family. Type 2 subfamily. In terms of assembly, homodimer. Mg(2+) serves as cofactor.

It is found in the cytoplasm. It catalyses the reaction tRNA(Asp) + L-aspartate + ATP = L-aspartyl-tRNA(Asp) + AMP + diphosphate. Catalyzes the attachment of L-aspartate to tRNA(Asp) in a two-step reaction: L-aspartate is first activated by ATP to form Asp-AMP and then transferred to the acceptor end of tRNA(Asp). The chain is Aspartate--tRNA(Asp) ligase from Thermoplasma volcanium (strain ATCC 51530 / DSM 4299 / JCM 9571 / NBRC 15438 / GSS1).